Here is a 156-residue protein sequence, read N- to C-terminus: Small ribosomal subunit protein uS7 (156 aa).

It belongs to the universal ribosomal protein uS7 family. As to quaternary structure, part of the 30S ribosomal subunit. Contacts proteins S9 and S11.

Its function is as follows. One of the primary rRNA binding proteins, it binds directly to 16S rRNA where it nucleates assembly of the head domain of the 30S subunit. Is located at the subunit interface close to the decoding center, probably blocks exit of the E-site tRNA. The chain is Small ribosomal subunit protein uS7 from Treponema pallidum (strain Nichols).